The chain runs to 843 residues: Elongation factor 2 (843 aa).

The 328-residue stretch at 17–344 (HNIRNMSVIA…MMIFHLPSPH (328 aa)) folds into the tr-type G domain. Residues 26-33 (AHVDHGKS) and 158-161 (NKMD) each bind GTP. His-700 carries the post-translational modification Diphthamide. Ser-837 carries the post-translational modification Phosphoserine.

It belongs to the TRAFAC class translation factor GTPase superfamily. Classic translation factor GTPase family. May interact with glutaredoxins (Grxs). In terms of tissue distribution, expressed in root, stem, leaves, flowers and siliques.

The protein resides in the cytoplasm. The enzyme catalyses GTP + H2O = GDP + phosphate + H(+). The protein operates within protein biosynthesis; polypeptide chain elongation. In terms of biological role, catalyzes the GTP-dependent ribosomal translocation step during translation elongation. During this step, the ribosome changes from the pre-translocational (PRE) to the post-translocational (POST) state as the newly formed A-site-bound peptidyl-tRNA and P-site-bound deacylated tRNA move to the P and E sites, respectively. Catalyzes the coordinated movement of the two tRNA molecules, the mRNA and conformational changes in the ribosome. Involved in cold responses leading to freezing tolerance via the induction of cold-responsive genes. This Arabidopsis thaliana (Mouse-ear cress) protein is Elongation factor 2.